Here is a 454-residue protein sequence, read N- to C-terminus: Transcription factor efuD (454 aa).

In terms of domain architecture, HTH TFE/IIEalpha-type spans 4–111 (AKELIRITAR…NYHRAIDSIK (108 aa)). The disordered stretch occupies residues 327–454 (LRTDDDGAMD…DEDELEFEDI (128 aa)). A compositionally biased stretch (acidic residues) spans 353 to 372 (DQDEEEEEEDDDDDEFEDVD). A compositionally biased stretch (polar residues) spans 387-401 (SVSTPATSAQVSSTA). The segment covering 423–437 (APAAAASSQAAAAES) has biased composition (low complexity). Over residues 442–454 (SDEDEDELEFEDI) the composition is skewed to acidic residues.

Belongs to the TFIIE alpha subunit family.

The protein localises to the nucleus. In terms of biological role, transcription factor; part of the gene cluster that mediates the biosynthesis of enfumafungin, a glycosylated fernene-type triterpenoid with potent antifungal activity, mediated by its interaction with beta-1,3-glucan synthase and the fungal cell wall. Is possibly responsible for the transcription regulation of one or more genes within the gene cluster. This Hormonema carpetanum protein is Transcription factor efuD.